Consider the following 349-residue polypeptide: Protein BCCIP homolog (349 aa).

Basic residues predominate over residues 1–10 (MGRVFKKKGG). The interval 1 to 65 (MGRVFKKKGG…DDEEEDEDEQ (65 aa)) is disordered. Residues 11 to 33 (AKREAEEEKQEELVMRKKLRKEE) are compositionally biased toward basic and acidic residues. The segment covering 34–65 (EPEPVEDVEEDEDVSDEDDEDIDDEEEDEDEQ) has biased composition (acidic residues).

The protein belongs to the BCP1 family.

This chain is Protein BCCIP homolog, found in Caenorhabditis elegans.